The chain runs to 343 residues: Methylthioribose-1-phosphate isomerase (343 aa).

Residues 48 to 50 (RGA), Arg88, and Gln193 contribute to the substrate site. Asp234 functions as the Proton donor in the catalytic mechanism. 244–245 (NK) contributes to the substrate binding site.

This sequence belongs to the eIF-2B alpha/beta/delta subunits family. MtnA subfamily.

It carries out the reaction 5-(methylsulfanyl)-alpha-D-ribose 1-phosphate = 5-(methylsulfanyl)-D-ribulose 1-phosphate. Its pathway is amino-acid biosynthesis; L-methionine biosynthesis via salvage pathway; L-methionine from S-methyl-5-thio-alpha-D-ribose 1-phosphate: step 1/6. In terms of biological role, catalyzes the interconversion of methylthioribose-1-phosphate (MTR-1-P) into methylthioribulose-1-phosphate (MTRu-1-P). This is Methylthioribose-1-phosphate isomerase from Thermotoga petrophila (strain ATCC BAA-488 / DSM 13995 / JCM 10881 / RKU-1).